Here is a 129-residue protein sequence, read N- to C-terminus: Glycine cleavage system H protein (129 aa).

One can recognise a Lipoyl-binding domain in the interval 24–106 (SVVVGVTQHA…YGAGWIVEIE (83 aa)). Lys-65 is modified (N6-lipoyllysine).

This sequence belongs to the GcvH family. The glycine cleavage system is composed of four proteins: P, T, L and H. It depends on (R)-lipoate as a cofactor.

In terms of biological role, the glycine cleavage system catalyzes the degradation of glycine. The H protein shuttles the methylamine group of glycine from the P protein to the T protein. In Myxococcus xanthus (strain DK1622), this protein is Glycine cleavage system H protein.